Consider the following 399-residue polypeptide: Ras-related GTP-binding protein C (399 aa).

The disordered stretch occupies residues 1–20 (MSLQYGAEETPLAGSYGAAD). N-acetylserine is present on S2. Phosphoserine occurs at positions 2 and 15. Residues R71, S72, G73, K74, S75, S76, T90, E94, T96, H178, K179, D181, S219, and I220 each contribute to the GDP site. K74 contributes to the GTP binding site. T90 provides a ligand contact to GTP. Residue T96 participates in GTP binding. T96 carries the post-translational modification Phosphothreonine. D181 contacts GTP.

Belongs to the GTR/RAG GTP-binding protein family. As to quaternary structure, forms a heterodimer with RRAGA, in a sequence-independent manner, and RRAGB. Heterodimerization stabilizes proteins of the heterodimer. The GDP-bound form of RRAGC (in complex with the GTP-bound form of RRAGA or RRAGB), interacts with RPTOR, thereby promoting recruitment of mTORC1 to the lysosomes. Component of the lysosomal folliculin complex (LFC), composed of FLCN, FNIP1 (or FNIP2), RagA/RRAGA or RagB/RRAGB GDP-bound, RagC/RRAGC or RagD/RRAGD GTP-bound, and Ragulator. Interacts with NOL8. Interacts with SH3BP4; the interaction with this negative regulator is most probably direct, preferentially occurs with the inactive GDP-bound form of RRAGB, is negatively regulated by amino acids and prevents interaction with RPTOR. The Rag heterodimer interacts with SLC38A9; the probable amino acid sensor. Interacts with SESN1, SESN2 and SESN3. Interacts with PIP4P1. The Rag heterodimer interacts with the Ragulator complex. The GDP-bound form interacts with TFEB. The GDP-bound form interacts with TFE3.

The protein localises to the cytoplasm. It is found in the nucleus. The protein resides in the lysosome membrane. The enzyme catalyses GTP + H2O = GDP + phosphate + H(+). The activation of RagC/RRAGC is mediated by a GTPase activating protein (GAP). In high-amino acid conditions, activated by GTPase activating protein FLCN that stimulates RRAGC GTPase activity to turn it into its active GDP-bound form. In response to amino acid depletion, the GATOR1 complex inactivates RagC/RRAGC by securing the GTP-bound inactive form. Its function is as follows. Guanine nucleotide-binding protein that plays a crucial role in the cellular response to amino acid availability through regulation of the mTORC1 signaling cascade. Forms heterodimeric Rag complexes with RagA/RRAGA or RagB/RRAGB and cycles between an inactive GTP-bound and an active GDP-bound form: RagC/RRAGC is in its active form when GDP-bound RagC/RRAGC forms a complex with GTP-bound RagA/RRAGA (or RagB/RRAGB) and in an inactive form when GTP-bound RagC/RRAGC heterodimerizes with GDP-bound RagA/RRAGA (or RagB/RRAGB). In its GDP-bound active form, promotes the recruitment of mTORC1 to the lysosomes and its subsequent activation by the GTPase RHEB. This is a crucial step in the activation of the MTOR signaling cascade by amino acids. Also plays a central role in the non-canonical mTORC1 complex, which acts independently of RHEB and specifically mediates phosphorylation of MiT/TFE factors TFEB and TFE3: GDP-bound RagC/RRAGC mediates recruitment of MiT/TFE factors TFEB and TFE3. This chain is Ras-related GTP-binding protein C, found in Homo sapiens (Human).